Consider the following 176-residue polypeptide: Warthog protein 5 (176 aa).

Residues 1–21 (MCSMWLMASWLMAFVAGSTLA) form the signal peptide. N70 carries N-linked (GlcNAc...) asparagine glycosylation.

Expressed in seam cells, excretory cell, reproductive system, pharynx, pharyngeal-intestinal valve cells, neurons and neuronal support cells.

The protein localises to the secreted. Intercellular signal essential for a variety of patterning events during development. This is Warthog protein 5 (wrt-5) from Caenorhabditis elegans.